A 67-amino-acid polypeptide reads, in one-letter code: Small ribosomal subunit protein eS17 (67 aa).

This sequence belongs to the eukaryotic ribosomal protein eS17 family.

The polypeptide is Small ribosomal subunit protein eS17 (Thermococcus sibiricus (strain DSM 12597 / MM 739)).